The sequence spans 97 residues: Small cell adhesion glycoprotein (97 aa).

The Extracellular portion of the chain corresponds to Met-1–Leu-36. O-linked (GalNAc...) threonine glycosylation occurs at Thr-2. Ser-3 carries an O-linked (GalNAc...) serine glycan. O-linked (GalNAc...) threonine glycans are attached at residues Thr-6, Thr-7, Thr-17, Thr-18, and Thr-23. The helical; Signal-anchor for type III membrane protein transmembrane segment at Ile-37–Phe-57 threads the bilayer. The Cytoplasmic segment spans residues Tyr-58–Ile-97.

It belongs to the SMAGP family. Post-translationally, O-glycosylated. The O-glycan is modified with sialic acid residues.

It localises to the cell membrane. It is found in the cytoplasmic vesicle membrane. May play a role in epithelial cell-cell contacts. May play a role in tumor invasiveness and metastasis formation. In Bos taurus (Bovine), this protein is Small cell adhesion glycoprotein (SMAGP).